The following is a 316-amino-acid chain: ATP synthase gamma chain (316 aa).

Belongs to the ATPase gamma chain family. In terms of assembly, F-type ATPases have 2 components, CF(1) - the catalytic core - and CF(0) - the membrane proton channel. CF(1) has five subunits: alpha(3), beta(3), gamma(1), delta(1), epsilon(1). CF(0) has three main subunits: a, b and c.

It localises to the cellular thylakoid membrane. Functionally, produces ATP from ADP in the presence of a proton gradient across the membrane. The gamma chain is believed to be important in regulating ATPase activity and the flow of protons through the CF(0) complex. This Prochlorococcus marinus (strain SARG / CCMP1375 / SS120) protein is ATP synthase gamma chain.